A 770-amino-acid chain; its full sequence is Transferrin receptor protein 1 (770 aa).

Residues 1 to 70 (MMDQARSAFS…KPKRCNGFIC (70 aa)) are Cytoplasmic-facing. A mediates interaction with SH3BP4 region spans residues 1 to 70 (MMDQARSAFS…KPKRCNGFIC (70 aa)). Phosphoserine occurs at positions 10 and 19. Tyr-20 bears the Phosphotyrosine mark. The short motif at 20 to 23 (YTRF) is the Endocytosis signal element. Thr-21 bears the Phosphothreonine mark. At Ser-24 the chain carries Phosphoserine. Positions 61-64 (KPKR) match the Stop-transfer sequence motif. S-palmitoyl cysteine attachment occurs at residues Cys-65 and Cys-70. A helical; Signal-anchor for type II membrane protein membrane pass occupies residues 71-90 (YGTIAVVLFFLIGFMIGYLG). Over 91-770 (YCKRVEPKAG…GDIWDIDNEF (680 aa)) the chain is Extracellular. The segment at 102-122 (ERPTGTEALGTERTEPSETEE) is disordered. An O-linked (GalNAc...) threonine glycan is attached at Thr-107. The region spanning 233 to 323 (SKATTVTGRL…GTGDPYTPGF (91 aa)) is the PA domain. N-linked (GlcNAc...) asparagine glycans are attached at residues Asn-261, Asn-327, and Asn-384. A ligand-binding region spans residues 579–770 (TMDLYENLNQ…GDIWDIDNEF (192 aa)). The Cell attachment site motif lies at 656 to 658 (RGD). Asn-732 and Asn-737 each carry an N-linked (GlcNAc...) asparagine glycan.

It belongs to the peptidase M28 family. M28B subfamily. In terms of assembly, homodimer; disulfide-linked. Binds one transferrin molecule per subunit. Interacts with SH3BP4. Interacts with STEAP3; facilitates TFRC endocytosis in erythroid precursor cells. Post-translationally, stearoylated by ZDHHC6 which inhibits TFRC-mediated activation of the JNK pathway and promotes mitochondrial fragmentation. Stearoylation does not affect iron uptake. In terms of processing, N- and O-glycosylated, phosphorylated and palmitoylated.

Its subcellular location is the cell membrane. The protein localises to the melanosome. Its function is as follows. Cellular uptake of iron occurs via receptor-mediated endocytosis of ligand-occupied transferrin receptor into specialized endosomes. Endosomal acidification leads to iron release. The apotransferrin-receptor complex is then recycled to the cell surface with a return to neutral pH and the concomitant loss of affinity of apotransferrin for its receptor. Transferrin receptor is necessary for development of erythrocytes and the nervous system. Positively regulates T and B cell proliferation through iron uptake. Acts as a lipid sensor that regulates mitochondrial fusion by regulating activation of the JNK pathway. When dietary levels of stearate (C18:0) are low, promotes activation of the JNK pathway, resulting in HUWE1-mediated ubiquitination and subsequent degradation of the mitofusin MFN2 and inhibition of mitochondrial fusion. When dietary levels of stearate (C18:0) are high, TFRC stearoylation inhibits activation of the JNK pathway and thus degradation of the mitofusin MFN2. Mediates uptake of NICOL1 into fibroblasts where it may regulate extracellular matrix production. This is Transferrin receptor protein 1 (TFRC) from Canis lupus familiaris (Dog).